A 380-amino-acid polypeptide reads, in one-letter code: Lipid-A-disaccharide synthase (380 aa).

Belongs to the LpxB family.

It catalyses the reaction a lipid X + a UDP-2-N,3-O-bis[(3R)-3-hydroxyacyl]-alpha-D-glucosamine = a lipid A disaccharide + UDP + H(+). It participates in bacterial outer membrane biogenesis; LPS lipid A biosynthesis. Condensation of UDP-2,3-diacylglucosamine and 2,3-diacylglucosamine-1-phosphate to form lipid A disaccharide, a precursor of lipid A, a phosphorylated glycolipid that anchors the lipopolysaccharide to the outer membrane of the cell. The polypeptide is Lipid-A-disaccharide synthase (Francisella tularensis subsp. tularensis (strain FSC 198)).